The sequence spans 637 residues: DNA gyrase subunit B (637 aa).

A Toprim domain is found at 422–536; it reads CEVYIVEGDS…AGYVYLAMPP (115 aa). Mg(2+) is bound by residues Glu428, Asp501, and Asp503.

This sequence belongs to the type II topoisomerase GyrB family. Heterotetramer, composed of two GyrA and two GyrB chains. In the heterotetramer, GyrA contains the active site tyrosine that forms a transient covalent intermediate with DNA, while GyrB binds cofactors and catalyzes ATP hydrolysis. Mg(2+) serves as cofactor. It depends on Mn(2+) as a cofactor. The cofactor is Ca(2+).

It is found in the cytoplasm. The catalysed reaction is ATP-dependent breakage, passage and rejoining of double-stranded DNA.. In terms of biological role, a type II topoisomerase that negatively supercoils closed circular double-stranded (ds) DNA in an ATP-dependent manner to modulate DNA topology and maintain chromosomes in an underwound state. Negative supercoiling favors strand separation, and DNA replication, transcription, recombination and repair, all of which involve strand separation. Also able to catalyze the interconversion of other topological isomers of dsDNA rings, including catenanes and knotted rings. Type II topoisomerases break and join 2 DNA strands simultaneously in an ATP-dependent manner. The protein is DNA gyrase subunit B of Treponema pallidum (strain Nichols).